The following is a 252-amino-acid chain: Enolase-phosphatase E1 (252 aa).

Residues D14 and E16 each contribute to the Mg(2+) site. Substrate is bound by residues 143–144 (SS) and K177. Mg(2+) is bound at residue D202.

The protein belongs to the HAD-like hydrolase superfamily. MasA/MtnC family. In terms of assembly, monomer. Mg(2+) serves as cofactor.

It localises to the cytoplasm. Its subcellular location is the nucleus. The enzyme catalyses 5-methylsulfanyl-2,3-dioxopentyl phosphate + H2O = 1,2-dihydroxy-5-(methylsulfanyl)pent-1-en-3-one + phosphate. Its pathway is amino-acid biosynthesis; L-methionine biosynthesis via salvage pathway; L-methionine from S-methyl-5-thio-alpha-D-ribose 1-phosphate: step 3/6. It functions in the pathway amino-acid biosynthesis; L-methionine biosynthesis via salvage pathway; L-methionine from S-methyl-5-thio-alpha-D-ribose 1-phosphate: step 4/6. In terms of biological role, bifunctional enzyme that catalyzes the enolization of 2,3-diketo-5-methylthiopentyl-1-phosphate (DK-MTP-1-P) into the intermediate 2-hydroxy-3-keto-5-methylthiopentenyl-1-phosphate (HK-MTPenyl-1-P), which is then dephosphorylated to form the acireductone 1,2-dihydroxy-3-keto-5-methylthiopentene (DHK-MTPene). The sequence is that of Enolase-phosphatase E1 from Drosophila persimilis (Fruit fly).